The primary structure comprises 493 residues: Mitochondrial distribution and morphology protein 10 (493 aa).

This sequence belongs to the MDM10 family. Component of the ER-mitochondria encounter structure (ERMES) or MDM complex, composed of MMM1, MDM10, MDM12 and MDM34. Associates with the mitochondrial outer membrane sorting assembly machinery SAM(core) complex, which consists of SAM35, SAM37 and SAM50, to form a SAM(holo) complex.

The protein localises to the mitochondrion outer membrane. Component of the ERMES/MDM complex, which serves as a molecular tether to connect the endoplasmic reticulum and mitochondria. Components of this complex are involved in the control of mitochondrial shape and protein biogenesis and may function in phospholipid exchange. MDM10 is involved in the late assembly steps of the general translocase of the mitochondrial outer membrane (TOM complex). Functions in the TOM40-specific route of the assembly of outer membrane beta-barrel proteins, including the association of TOM40 with the receptor TOM22 and small TOM proteins. Can associate with the SAM(core) complex as well as the MDM12-MMM1 complex, both involved in late steps of the major beta-barrel assembly pathway, that is responsible for biogenesis of all outer membrane beta-barrel proteins. May act as a switch that shuttles between both complexes and channels precursor proteins into the TOM40-specific pathway. Plays a role in mitochondrial morphology and in the inheritance of mitochondria. The polypeptide is Mitochondrial distribution and morphology protein 10 (Saccharomyces cerevisiae (strain ATCC 204508 / S288c) (Baker's yeast)).